Here is a 103-residue protein sequence, read N- to C-terminus: Large ribosomal subunit protein bL21 (103 aa).

Belongs to the bacterial ribosomal protein bL21 family. Part of the 50S ribosomal subunit. Contacts protein L20.

This protein binds to 23S rRNA in the presence of protein L20. This Actinobacillus succinogenes (strain ATCC 55618 / DSM 22257 / CCUG 43843 / 130Z) protein is Large ribosomal subunit protein bL21.